The chain runs to 721 residues: BBSome complex member BBS2 (721 aa).

The stretch at 325-369 forms a coiled coil; it reads RGNLMDTSAEQDLIRELSQKKQNLLLELRNYEENAKAELASPLNE.

In terms of assembly, part of BBSome complex, that contains BBS1, BBS2, BBS4, BBS5, BBS7, BBS8/TTC8, BBS9 and BBIP10. Interacts (via C-terminus) with BBS7. Interacts (via coiled coil domain) with MKKS. Interacts with CCDC28B and ALDOB. Interacts with DLEC1. As to expression, widely expressed.

The protein resides in the cell projection. Its subcellular location is the cilium membrane. It localises to the cytoplasm. It is found in the cytoskeleton. The protein localises to the microtubule organizing center. The protein resides in the centrosome. Its subcellular location is the centriolar satellite. Functionally, the BBSome complex is thought to function as a coat complex required for sorting of specific membrane proteins to the primary cilia. The BBSome complex is required for ciliogenesis but is dispensable for centriolar satellite function. This ciliogenic function is mediated in part by the Rab8 GDP/GTP exchange factor, which localizes to the basal body and contacts the BBSome. Rab8(GTP) enters the primary cilium and promotes extension of the ciliary membrane. Firstly the BBSome associates with the ciliary membrane and binds to RAB3IP/Rabin8, the guanosyl exchange factor (GEF) for Rab8 and then the Rab8-GTP localizes to the cilium and promotes docking and fusion of carrier vesicles to the base of the ciliary membrane. The BBSome complex, together with the LTZL1, controls SMO ciliary trafficking and contributes to the sonic hedgehog (SHH) pathway regulation. Required for proper BBSome complex assembly and its ciliary localization. The polypeptide is BBSome complex member BBS2 (Homo sapiens (Human)).